A 975-amino-acid polypeptide reads, in one-letter code: Kinesin-like protein KIN-14K (975 aa).

A disordered region spans residues 1–40 (MKNRIKKGSSMIGVYGRSDGSSSIQSSNGSESRESIDDNK). Residues 17-30 (RSDGSSSIQSSNGS) are compositionally biased toward low complexity. Positions 31 to 40 (ESRESIDDNK) are enriched in basic and acidic residues. Residues 40–143 (KQGHQSLVEW…SLKALKASFS (104 aa)) enclose the Calponin-homology (CH) domain. A coiled-coil region spans residues 289–345 (KERSNAELSKLKQELEIVKETHEKQFLELKLNAQKAKVELERQVKNSELRVVEAKEL). One can recognise a Kinesin motor domain in the interval 436-746 (NIRVYCRIRP…LKFAERVSGV (311 aa)). Residue 520–527 (GQTGSGKT) coordinates ATP. A coiled-coil region spans residues 757-788 (GRDVRQLMEQVSNLKDMIAKKDEELQKFQNIN). Disordered stretches follow at residues 801 to 852 (VSPP…GAKD) and 900 to 975 (LFPE…NRKR). Low complexity predominate over residues 944-958 (LSISTTSSKALTSSK).

The protein belongs to the TRAFAC class myosin-kinesin ATPase superfamily. Kinesin family. KIN-14 subfamily.

The sequence is that of Kinesin-like protein KIN-14K from Arabidopsis thaliana (Mouse-ear cress).